Here is a 511-residue protein sequence, read N- to C-terminus: E3 ubiquitin-protein ligase TRIM7 (511 aa).

The RING-type zinc-finger motif lies at 29–82; sequence CSICLELFREPVSVECGHSFCRACIGRCWERPGAGSVGAATRAPPFPLPCPQCR. Serine 107 is subject to Phosphoserine; by RPS6KA5. The B box-type zinc-finger motif lies at 125–166; sequence AAAARCGQHGEPFKLYCQDDGRAICVVCDRAREHREHAVLPL. Residues cysteine 130, histidine 133, cysteine 152, and histidine 158 each contribute to the Zn(2+) site. Positions 166–263 form a coiled coil; the sequence is LDEAVQEAKE…AQLGVEITQL (98 aa). In terms of domain architecture, B30.2/SPRY spans 324–511; sequence MLKKFKEDLR…STGTYLRIWP (188 aa).

This sequence belongs to the TRIM/RBCC family. Forms homodimers. Interacts with GNIP2. Interacts with GYG1. Interacts with RNF187 (via C-terminus). Post-translationally, phosphorylated at Ser-107 by RPS6KA5/MSK1, which stimulates the ubiquitin ligase activity. Auto-ubiquitinates via 'Lys-63'-linked polyubiquitination. Skeletal muscle and placenta, at lower levels in heart, brain and pancreas. Isoform 1 is widely expressed with high level in testis, kidney and heart.

It localises to the nucleus. Its subcellular location is the cytoplasm. It is found in the golgi apparatus. The enzyme catalyses S-ubiquitinyl-[E2 ubiquitin-conjugating enzyme]-L-cysteine + [acceptor protein]-L-lysine = [E2 ubiquitin-conjugating enzyme]-L-cysteine + N(6)-ubiquitinyl-[acceptor protein]-L-lysine.. The protein operates within protein modification; protein ubiquitination. E3 ubiquitin-protein ligase that have both tumor-promoting and tumor-suppressing activities and functions in several biological processes including innate immunity, regulation of ferroptosis as well as cell proliferation and migration. Acts as an antiviral effector against multiple viruses by targeting specific viral proteins for ubiquitination and degradation including norovirus NTPase protein or SARS-CoV-2 NSP5 and NSP8 proteins. Mechanistically, recognizes the C-terminal glutamine-containing motif usually generated by viral proteases that process the polyproteins and trigger their ubiquitination and subsequent degradation. Mediates 'Lys-63'-linked polyubiquitination and stabilization of the JUN coactivator RNF187 in response to growth factor signaling via the MEK/ERK pathway, thereby regulating JUN transactivation and cellular proliferation. Promotes the TLR4-mediated signaling activation through its E3 ligase domain leading to production of pro-inflammatory cytokines and type I interferon. Also plays a negative role in the regulation of exogenous cytosolic DNA virus-triggered immune response. Mechanistically, enhances the 'Lys-48'-linked ubiquitination of STING1 leading to its proteasome-dependent degradation. Mediates the ubiquitination of the SIN3-HDAC chromatin remodeling complex component BRMS1. Modulates NCOA4-mediated ferritinophagy and ferroptosis in glioblastoma cells by ubiquitinating NCOA4, leading to its degradation. Its function is as follows. (Microbial infection) Promotes Zika virus replication by mediating envelope protein E ubiquitination. In Homo sapiens (Human), this protein is E3 ubiquitin-protein ligase TRIM7 (TRIM7).